The chain runs to 379 residues: Mannan endo-1,4-beta-mannosidase 7 (379 aa).

2 residues coordinate substrate: W64 and N179. The active-site Proton donor is E180. Y260 is a substrate binding site. E300 functions as the Nucleophile in the catalytic mechanism. W342 provides a ligand contact to substrate.

This sequence belongs to the glycosyl hydrolase 5 (cellulase A) family. In terms of tissue distribution, expression not detected.

The catalysed reaction is Random hydrolysis of (1-&gt;4)-beta-D-mannosidic linkages in mannans, galactomannans and glucomannans.. The chain is Mannan endo-1,4-beta-mannosidase 7 (MAN7) from Oryza sativa subsp. japonica (Rice).